Consider the following 1024-residue polypeptide: P3N-PIPO polyprotein (1024 aa).

In terms of domain architecture, Peptidase S30 spans 165 to 308; sequence RMSEASLQLF…KKQSNEIIHY (144 aa). Residues His216, Asp225, and Ser259 each act as for P1 proteinase activity in the active site. The Involved in interaction with stylet and aphid transmission motif lies at 360 to 363; sequence KITC. Residues 619-621 carry the Involved in virions binding and aphid transmission motif; the sequence is PTK. One can recognise a Peptidase C6 domain in the interval 645-767; that stretch reads MFIAKAGYCY…DSNMKTYLVG (123 aa). Active-site for helper component proteinase activity residues include Cys653 and His726.

Belongs to the potyviridae P3N-PIPO polyprotein family. Interacts (via PIPO domain) with host PCaP1 protein; this interaction may help to anchor the movement complex to the plasma membrane from which the complex could move to the plasmodesmata. In terms of processing, potyviral RNA is expressed as two polyproteins which undergo post-translational proteolytic processing. Genome polyprotein is processed by NIa-pro, P1 and HC-pro proteinases resulting in the production of at least ten individual proteins. P3N-PIPO is cleaved by P1 and HC-pro proteinases resulting in the production of three individual proteins. The P1 proteinase and the HC-pro cleave only their respective C-termini autocatalytically.

Its subcellular location is the host cell junction. The protein resides in the host plasmodesma. The catalysed reaction is Hydrolyzes a Gly-|-Gly bond at its own C-terminus, commonly in the sequence -Tyr-Xaa-Val-Gly-|-Gly, in the processing of the potyviral polyprotein.. Its function is as follows. Required for aphid transmission and also has proteolytic activity. Only cleaves a Gly-Gly dipeptide at its own C-terminus. Interacts with virions and aphid stylets. Acts as a suppressor of RNA-mediated gene silencing, also known as post-transcriptional gene silencing (PTGS), a mechanism of plant viral defense that limits the accumulation of viral RNAs. May have RNA-binding activity. Functionally, allows efficient cell to cell propagation, by bypassing the host cell wall barrier. Transports viral genome to neighboring plant cells directly through plasmosdesmata, without any budding. This is P3N-PIPO polyprotein from Plum pox potyvirus (strain D) (PPV).